Here is a 285-residue protein sequence, read N- to C-terminus: Sulfotransferase 2A6 (285 aa).

A 3'-phosphoadenylyl sulfate-binding site is contributed by 44-49; sequence KSGTNW. The active-site Proton acceptor is the His99. Residues Arg121, Ser129, Tyr184, 218-223, and 247-249 each bind 3'-phosphoadenylyl sulfate; these read SSFQAM and RKG.

This sequence belongs to the sulfotransferase 1 family. In terms of assembly, oligomer.

Its subcellular location is the cytoplasm. It localises to the cytosol. It catalyses the reaction an alcohol + 3'-phosphoadenylyl sulfate = an alkyl sulfate + adenosine 3',5'-bisphosphate + H(+). The enzyme catalyses glycolithocholate + 3'-phosphoadenylyl sulfate = sulfoglycolithocholate + adenosine 3',5'-bisphosphate + H(+). The catalysed reaction is taurolithocholate + 3'-phosphoadenylyl sulfate = taurolithocholate 3-sulfate + adenosine 3',5'-bisphosphate + H(+). It carries out the reaction 3beta-hydroxyandrost-5-en-17-one + 3'-phosphoadenylyl sulfate = dehydroepiandrosterone 3-sulfate + adenosine 3',5'-bisphosphate + H(+). In terms of biological role, sulfotransferase that utilizes 3'-phospho-5'-adenylyl sulfate (PAPS) as sulfonate donor to catalyze the sulfonation of the hydroxyl group of hydroxysteroids and bile acids. The sequence is that of Sulfotransferase 2A6 from Mus musculus (Mouse).